We begin with the raw amino-acid sequence, 301 residues long: ATP synthase gamma chain (301 aa).

The protein belongs to the ATPase gamma chain family. In terms of assembly, F-type ATPases have 2 components, CF(1) - the catalytic core - and CF(0) - the membrane proton channel. CF(1) has five subunits: alpha(3), beta(3), gamma(1), delta(1), epsilon(1). CF(0) has three main subunits: a, b and c.

The protein resides in the cell inner membrane. Its function is as follows. Produces ATP from ADP in the presence of a proton gradient across the membrane. The gamma chain is believed to be important in regulating ATPase activity and the flow of protons through the CF(0) complex. This is ATP synthase gamma chain from Helicobacter acinonychis (strain Sheeba).